Consider the following 387-residue polypeptide: Succinyl-diaminopimelate desuccinylase (387 aa).

His74 is a Zn(2+) binding site. Asp76 is an active-site residue. Asp107 is a Zn(2+) binding site. Glu142 functions as the Proton acceptor in the catalytic mechanism. 3 residues coordinate Zn(2+): Glu143, Glu171, and His360.

It belongs to the peptidase M20A family. DapE subfamily. Homodimer. It depends on Zn(2+) as a cofactor. The cofactor is Co(2+).

The enzyme catalyses N-succinyl-(2S,6S)-2,6-diaminopimelate + H2O = (2S,6S)-2,6-diaminopimelate + succinate. It participates in amino-acid biosynthesis; L-lysine biosynthesis via DAP pathway; LL-2,6-diaminopimelate from (S)-tetrahydrodipicolinate (succinylase route): step 3/3. In terms of biological role, catalyzes the hydrolysis of N-succinyl-L,L-diaminopimelic acid (SDAP), forming succinate and LL-2,6-diaminopimelate (DAP), an intermediate involved in the bacterial biosynthesis of lysine and meso-diaminopimelic acid, an essential component of bacterial cell walls. This is Succinyl-diaminopimelate desuccinylase from Rhodopseudomonas palustris (strain TIE-1).